The chain runs to 261 residues: Pyridoxine-5'-phosphate oxidase (261 aa).

Residue 42 to 45 (RGDR) participates in pyridoxal 5'-phosphate binding. 95–98 (RMLL) contacts FMN. Lys100 contacts pyridoxal 5'-phosphate. Residues 110-111 (FT), 116-117 (RK), and Gln139 each bind FMN. 3 residues coordinate pyridoxal 5'-phosphate: Tyr157, Arg161, and Ser165. FMN is bound by residues 174–175 (QS) and Trp219. 225–227 (RLH) lines the pyridoxal 5'-phosphate pocket. Residue Arg229 participates in FMN binding. Position 238 is a phosphothreonine (Thr238). A Phosphoserine modification is found at Ser241.

The protein belongs to the pyridoxamine 5'-phosphate oxidase family. In terms of assembly, homodimer. FMN is required as a cofactor. In terms of tissue distribution, ubiquitous. Expressed in liver, brain, lung, prostate and stomach (at protein level).

It catalyses the reaction pyridoxine 5'-phosphate + O2 = pyridoxal 5'-phosphate + H2O2. The catalysed reaction is pyridoxamine 5'-phosphate + O2 + H2O = pyridoxal 5'-phosphate + H2O2 + NH4(+). The protein operates within cofactor metabolism; pyridoxal 5'-phosphate salvage; pyridoxal 5'-phosphate from pyridoxamine 5'-phosphate: step 1/1. It participates in cofactor metabolism; pyridoxal 5'-phosphate salvage; pyridoxal 5'-phosphate from pyridoxine 5'-phosphate: step 1/1. Functionally, catalyzes the oxidation of either pyridoxine 5'-phosphate (PNP) or pyridoxamine 5'-phosphate (PMP) into pyridoxal 5'-phosphate (PLP). The protein is Pyridoxine-5'-phosphate oxidase (PNPO) of Homo sapiens (Human).